Here is a 579-residue protein sequence, read N- to C-terminus: uncharacterized protein (579 aa).

11 consecutive transmembrane segments (helical) span residues 13–35 (DLIK…IPWI), 39–61 (SISR…LLLN), 66–83 (ANGL…AFYF), 93–110 (AYWG…TYPL), 130–152 (LAIV…IEYL), 162–181 (IVPK…FFLI), 201–223 (LIVN…LYLA), 238–257 (YIIM…RLLL), 264–286 (GFYR…GIHT), 296–315 (IRVM…LFSM), and 324–346 (LFSL…YYLA).

The protein localises to the cell membrane. This is an uncharacterized protein from Pasteurella multocida (strain Pm70).